The following is a 145-amino-acid chain: Ribosome maturation factor RimP (145 aa).

Belongs to the RimP family.

Its subcellular location is the cytoplasm. Its function is as follows. Required for maturation of 30S ribosomal subunits. The protein is Ribosome maturation factor RimP of Borreliella afzelii (strain PKo) (Borrelia afzelii).